Reading from the N-terminus, the 333-residue chain is T-cell surface glycoprotein CD1b1 (333 aa).

Residues 1-17 form the signal peptide; sequence MLLVALALLAFLFPAGD. Residues 18-302 are Extracellular-facing; that stretch reads TQNALQWPTS…LYWGHSISIG (285 aa). N-linked (GlcNAc...) asparagine glycans are attached at residues Asn38, Asn75, and Asn146. Intrachain disulfides connect Cys120–Cys184, Cys149–Cys163, and Cys224–Cys279. Residues 197-295 enclose the Ig-like domain; sequence PDIQKQVKPD…LEGQDIILYW (99 aa). Residues 303–323 form a helical membrane-spanning segment; it reads WIILAVLVPCLIVLVLFVLWF. Topologically, residues 324–333 are cytoplasmic; the sequence is YRRWSYEDIL. The Internalization signal signature appears at 329–332; it reads YEDI.

As to quaternary structure, heterodimer with B2M (beta-2-microglobulin). Interacts with saposin C.

It localises to the cell membrane. It is found in the endosome membrane. The protein resides in the lysosome membrane. Functionally, antigen-presenting protein that binds self and non-self lipid and glycolipid antigens and presents them to T-cell receptors on natural killer T-cells. The protein is T-cell surface glycoprotein CD1b1 (CD1B1) of Cavia porcellus (Guinea pig).